We begin with the raw amino-acid sequence, 316 residues long: Pantothenate kinase (316 aa).

95–102 is a binding site for ATP; sequence GSVAVGKS.

Belongs to the prokaryotic pantothenate kinase family.

It localises to the cytoplasm. It carries out the reaction (R)-pantothenate + ATP = (R)-4'-phosphopantothenate + ADP + H(+). It functions in the pathway cofactor biosynthesis; coenzyme A biosynthesis; CoA from (R)-pantothenate: step 1/5. In Shewanella pealeana (strain ATCC 700345 / ANG-SQ1), this protein is Pantothenate kinase.